The chain runs to 31 residues: Scolopendra 4610.56 Da toxin (31 aa).

It belongs to the scolopendra toxin 1 family. Post-translationally, contains one or more disulfide bonds. As to expression, expressed by the venom gland.

Its subcellular location is the secreted. In Scolopendra viridicornis nigra (Brazilian giant centipede), this protein is Scolopendra 4610.56 Da toxin.